A 1128-amino-acid chain; its full sequence is Probable serine/threonine-protein kinase DDB_G0283337 (1128 aa).

Residues 1–17 show a composition bias toward low complexity; it reads MENNNNNNINKTNTPNN. Disordered stretches follow at residues 1–21, 60–100, 131–151, 236–256, and 375–504; these read MENN…SFSP, INHN…NNNN, RESN…NNSN, NNSK…SNSN, and NDNE…NSEQ. 2 stretches are compositionally biased toward low complexity: residues 243–256 and 375–502; these read NSSN…SNSN and NDNE…NNNS. The Protein kinase domain maps to 777-1054; that stretch reads LSDFSIIGEG…EIQKCKEEYE (278 aa). ATP contacts are provided by residues 783-791 and K809; that span reads IGEGGFSTV. Residue D904 is the Proton acceptor of the active site.

The protein belongs to the protein kinase superfamily. Ser/Thr protein kinase family.

It catalyses the reaction L-seryl-[protein] + ATP = O-phospho-L-seryl-[protein] + ADP + H(+). The catalysed reaction is L-threonyl-[protein] + ATP = O-phospho-L-threonyl-[protein] + ADP + H(+). The sequence is that of Probable serine/threonine-protein kinase DDB_G0283337 from Dictyostelium discoideum (Social amoeba).